A 1310-amino-acid chain; its full sequence is Rho family-interacting cell polarization regulator 2 (1310 aa).

A phosphoserine mark is found at Ser123 and Ser178. An involved in cell filopodia formation region spans residues 196-254 (MHNLGHKNTNTPKEPQPKRVEEVYRALKNGLDEYLEFHQTELDKLTAQLKDMKRNSRLG). Residues 224 to 253 (NGLDEYLEFHQTELDKLTAQLKDMKRNSRL) are a coiled coil. Residue Ser508 is modified to Phosphoserine. Over residues 588-608 (SSLSSQNEGTEDSSSASSRNS) the composition is skewed to polar residues. Residues 588–639 (SSLSSQNEGTEDSSSASSRNSLGEDHEPKSHSKSDTVEPKKPSVDARSGTES) are disordered. Residues 609–631 (LGEDHEPKSHSKSDTVEPKKPSV) show a composition bias toward basic and acidic residues. Ser682 bears the Phosphoserine mark.

Belongs to the RIPOR family. In terms of assembly, homooligomer; homooligomerization is regulated by RHOC and leads to the formation of concatemers through the association of N- and C-termini. Interacts (phosphorylated form) with 14-3-3 proteins; these interactions occur during myogenic cell differentiation and also induces T cell proliferation arrest. Interacts (phosphorylated form) with HDAC6; this interaction occurs during early myogenic differentiation, prevents HDAC6 to deacetylate tubulin and also induces T cell proliferation arrest. Interacts with DYSF; this interaction occurs during early myogenic differentiation. Interacts with MYOF. Interacts (via active GTP- or inactive GDP-bound forms) with RHOA; this interaction is direct, blocks the loading of GTP to RHOA and decreases upon chemokine CCL19 stimulation in primary T lymphocytes. Interacts with RHOC. Interacts (via phosphorylated form) with YWHAB; this interaction occurs in a chemokine-dependent manner and does not compete for binding of RIPOR2 with RHOA nor blocks inhibition of RIPOR2-mediated RHOA activity. Interacts with YWHAE. Interacts with YWHAQ. Phosphorylated. Chemokine-induced phosphorylation in neutrophils occurs in a PKC- and AKT-dependent manner, resulting in RIPOR2 interaction with YWHAB and stabilization. Phosphorylated by PKCA, AKT1 and MAPKAPK1A; in vitro. Expressed in the cochlea (at protein level).

The protein localises to the cytoplasm. It is found in the cytoskeleton. It localises to the cell projection. The protein resides in the filopodium. Its subcellular location is the apical cell membrane. The protein localises to the stereocilium. It is found in the stereocilium membrane. In terms of biological role, acts as an inhibitor of the small GTPase RHOA and plays several roles in the regulation of myoblast and hair cell differentiation, lymphocyte T proliferation and neutrophil polarization. Plays a role in fetal mononuclear myoblast differentiation by promoting filopodia and myotube formation. Maintains naive T lymphocytes in a quiescent state and prevents chemokine-induced T lymphocyte responses, such as cell adhesion, polarization and migration. Involved also in the regulation of neutrophil polarization, chemotaxis and adhesion. Required for normal development of inner and outer hair cell stereocilia within the cochlea of the inner ear. Plays a role for maintaining the structural organization of the basal domain of stereocilia. Involved in mechanosensory hair cell function. Required for normal hearing. This chain is Rho family-interacting cell polarization regulator 2, found in Rattus norvegicus (Rat).